A 588-amino-acid chain; its full sequence is uncharacterized protein (588 aa).

This is an uncharacterized protein from Schizosaccharomyces pombe (strain 972 / ATCC 24843) (Fission yeast).